Reading from the N-terminus, the 274-residue chain is Sulfur carrier protein FdhD (274 aa).

Catalysis depends on cysteine 121, which acts as the Cysteine persulfide intermediate. Residue 258 to 263 coordinates Mo-bis(molybdopterin guanine dinucleotide); the sequence is FSKPGR.

This sequence belongs to the FdhD family.

The protein localises to the cytoplasm. Functionally, required for formate dehydrogenase (FDH) activity. Acts as a sulfur carrier protein that transfers sulfur from IscS to the molybdenum cofactor prior to its insertion into FDH. The polypeptide is Sulfur carrier protein FdhD (Yersinia pseudotuberculosis serotype O:1b (strain IP 31758)).